The chain runs to 298 residues: Lipoyl synthase (298 aa).

Positions 40, 45, 51, 67, 71, 74, and 280 each coordinate [4Fe-4S] cluster. Positions 53–269 (AVRRTATFMI…KEIALSKGFT (217 aa)) constitute a Radical SAM core domain.

It belongs to the radical SAM superfamily. Lipoyl synthase family. It depends on [4Fe-4S] cluster as a cofactor.

The protein localises to the cytoplasm. It catalyses the reaction [[Fe-S] cluster scaffold protein carrying a second [4Fe-4S](2+) cluster] + N(6)-octanoyl-L-lysyl-[protein] + 2 oxidized [2Fe-2S]-[ferredoxin] + 2 S-adenosyl-L-methionine + 4 H(+) = [[Fe-S] cluster scaffold protein] + N(6)-[(R)-dihydrolipoyl]-L-lysyl-[protein] + 4 Fe(3+) + 2 hydrogen sulfide + 2 5'-deoxyadenosine + 2 L-methionine + 2 reduced [2Fe-2S]-[ferredoxin]. It functions in the pathway protein modification; protein lipoylation via endogenous pathway; protein N(6)-(lipoyl)lysine from octanoyl-[acyl-carrier-protein]. Functionally, catalyzes the radical-mediated insertion of two sulfur atoms into the C-6 and C-8 positions of the octanoyl moiety bound to the lipoyl domains of lipoate-dependent enzymes, thereby converting the octanoylated domains into lipoylated derivatives. The sequence is that of Lipoyl synthase from Geobacillus sp. (strain WCH70).